Consider the following 119-residue polypeptide: MPRVKGGTVTRRRRKKVLKLAKGYFGAKHALYRVANQQVMKSLMYAYRDRRQRKRDFRKLWIARINAAARMHGLSYSRFMHGLKLAGVEVNRKMLADLAVNDQAAFAQLADLAKANLNK.

This sequence belongs to the bacterial ribosomal protein bL20 family.

Functionally, binds directly to 23S ribosomal RNA and is necessary for the in vitro assembly process of the 50S ribosomal subunit. It is not involved in the protein synthesizing functions of that subunit. The polypeptide is Large ribosomal subunit protein bL20 (Geobacillus sp. (strain WCH70)).